The following is a 138-amino-acid chain: MRTLWIMAVLLLGVDGSLVQLWKMIFQETGKEAAKNYGLYGCNCGVGRRGKPKDATDSCCYVHKCCYKKVTGCDPKMDSYSYSWKNKAIVCGEKNPPCLKQVCECDKAVAICLRENLGTYNKKYTIYPKPFCKKADTC.

An N-terminal signal peptide occupies residues 1-16; that stretch reads MRTLWIMAVLLLGVDG. Disulfide bonds link cysteine 42–cysteine 132, cysteine 44–cysteine 60, cysteine 59–cysteine 112, cysteine 65–cysteine 138, cysteine 66–cysteine 105, cysteine 73–cysteine 98, and cysteine 91–cysteine 103. 2 residues coordinate Ca(2+): glycine 45 and glycine 47. Residue histidine 63 is part of the active site. The active site involves aspartate 106.

This sequence belongs to the phospholipase A2 family. Group II subfamily. K49 sub-subfamily. Ca(2+) serves as cofactor. As to expression, expressed by the venom gland.

It localises to the secreted. It catalyses the reaction a 1,2-diacyl-sn-glycero-3-phosphocholine + H2O = a 1-acyl-sn-glycero-3-phosphocholine + a fatty acid + H(+). In terms of biological role, snake venom phospholipase A2 (PLA2) that has strong myotoxic activity with a low phospholipase A2 activity. PLA2 catalyzes the calcium-dependent hydrolysis of the 2-acyl groups in 3-sn-phosphoglycerides. This Protobothrops flavoviridis (Habu) protein is Basic phospholipase A2 BP-I.